We begin with the raw amino-acid sequence, 76 residues long: MATGTPAHELRELSAEELTTRLHEAKEELFNLRFQNATGQLTNNRRLGTVKRDIARIHTVIRERELGLSSAPGDEA.

It belongs to the universal ribosomal protein uL29 family.

The protein is Large ribosomal subunit protein uL29 of Corynebacterium kroppenstedtii (strain DSM 44385 / JCM 11950 / CIP 105744 / CCUG 35717).